The following is a 353-amino-acid chain: Putative glycosyltransferase TagX (353 aa).

It belongs to the glycosyltransferase 2 family.

The protein is Putative glycosyltransferase TagX (tagX) of Staphylococcus aureus (strain MRSA252).